The primary structure comprises 484 residues: Secreted RxLR effector protein 104 (484 aa).

Residues 1-24 (MRSAYPVLTALLVVASSQIAAGSG) form the signal peptide. A RxLR-dEER motif is present at residues 48-65 (RFLRGSRDVHNNVANEER). N-linked (GlcNAc...) asparagine glycosylation occurs at asparagine 175. The tract at residues 324–463 (ENPKGQSPYP…SSSVLTPEDV (140 aa)) is disordered. The segment covering 327–346 (KGQSPYPSTPLTAASTSKGG) has biased composition (polar residues). Positions 402 to 413 (SSSSGPSRAFAP) are enriched in low complexity. Residues 418–428 (DQTFITENSRL) show a composition bias toward polar residues.

The protein belongs to the RxLR effector family.

The protein localises to the secreted. It is found in the host nucleus. Its function is as follows. Secreted effector that completely suppresses the host cell death induced by cell death-inducing proteins. The protein is Secreted RxLR effector protein 104 of Plasmopara viticola (Downy mildew of grapevine).